The sequence spans 305 residues: Transcription factor MYB87 (305 aa).

HTH myb-type domains are found at residues 9–66 (KMAV…RPNL) and 67–117 (KHGG…KKKL). DNA-binding regions (H-T-H motif) lie at residues 38–62 (WISL…LNYL) and 90–113 (WSII…NTRL).

In terms of tissue distribution, expressed in roots, leaves, internodes, shoot tips and flowers.

It is found in the nucleus. Functionally, transcription factor that functions as a regulator of genes affecting cell wall organization and remodeling. Activates genes related to the primary cell wall and represses genes related to the secondary cell wall and expansins. Required for the regulation of longitudinal cell growth in stems, leaves, petioles, roots, flowers and siliques. This is Transcription factor MYB87 from Arabidopsis thaliana (Mouse-ear cress).